Here is a 540-residue protein sequence, read N- to C-terminus: Membrane protein insertase YidC (540 aa).

5 consecutive transmembrane segments (helical) span residues 7–27, 345–365, 415–435, 453–473, and 494–514; these read LLVL…QMDY, IVSN…GILY, LGGC…YWTF, LSAQ…MFLL, and PLIF…YWLV.

Belongs to the OXA1/ALB3/YidC family. Type 1 subfamily. As to quaternary structure, interacts with the Sec translocase complex via SecD. Specifically interacts with transmembrane segments of nascent integral membrane proteins during membrane integration.

It is found in the cell inner membrane. Required for the insertion and/or proper folding and/or complex formation of integral membrane proteins into the membrane. Involved in integration of membrane proteins that insert both dependently and independently of the Sec translocase complex, as well as at least some lipoproteins. Aids folding of multispanning membrane proteins. The polypeptide is Membrane protein insertase YidC (Mannheimia succiniciproducens (strain KCTC 0769BP / MBEL55E)).